Reading from the N-terminus, the 321-residue chain is NADH-quinone oxidoreductase subunit H (321 aa).

8 helical membrane-spanning segments follow: residues 9 to 29, 78 to 98, 111 to 131, 156 to 176, 183 to 203, 234 to 254, 262 to 282, and 296 to 316; these read LLAI…GAYM, IIFT…FAIM, IGIL…LLGG, FLGL…ISTI, IWNI…GLAI, FFIG…TLFF, LPPY…FILI, and ILGW…TAIV.

It belongs to the complex I subunit 1 family. In terms of assembly, NDH-1 is composed of 14 different subunits. Subunits NuoA, H, J, K, L, M, N constitute the membrane sector of the complex.

It localises to the cell membrane. It catalyses the reaction a quinone + NADH + 5 H(+)(in) = a quinol + NAD(+) + 4 H(+)(out). Its function is as follows. NDH-1 shuttles electrons from NADH, via FMN and iron-sulfur (Fe-S) centers, to quinones in the respiratory chain. The immediate electron acceptor for the enzyme in this species is believed to be ubiquinone. Couples the redox reaction to proton translocation (for every two electrons transferred, four hydrogen ions are translocated across the cytoplasmic membrane), and thus conserves the redox energy in a proton gradient. This subunit may bind ubiquinone. The protein is NADH-quinone oxidoreductase subunit H of Baumannia cicadellinicola subsp. Homalodisca coagulata.